The following is a 123-amino-acid chain: Large ribosomal subunit protein bL19 (123 aa).

Belongs to the bacterial ribosomal protein bL19 family.

This protein is located at the 30S-50S ribosomal subunit interface and may play a role in the structure and function of the aminoacyl-tRNA binding site. This chain is Large ribosomal subunit protein bL19, found in Acinetobacter baylyi (strain ATCC 33305 / BD413 / ADP1).